A 404-amino-acid polypeptide reads, in one-letter code: Cysteine desulfurase IscS (404 aa).

Pyridoxal 5'-phosphate-binding positions include 75–76 (AT), Asn155, Gln183, and 203–205 (SGH). Residue Lys206 is modified to N6-(pyridoxal phosphate)lysine. Thr243 contributes to the pyridoxal 5'-phosphate binding site. Cys328 functions as the Cysteine persulfide intermediate in the catalytic mechanism. [2Fe-2S] cluster is bound at residue Cys328.

This sequence belongs to the class-V pyridoxal-phosphate-dependent aminotransferase family. NifS/IscS subfamily. In terms of assembly, homodimer. Forms a heterotetramer with IscU, interacts with other sulfur acceptors. The cofactor is pyridoxal 5'-phosphate.

It is found in the cytoplasm. The enzyme catalyses (sulfur carrier)-H + L-cysteine = (sulfur carrier)-SH + L-alanine. It participates in cofactor biosynthesis; iron-sulfur cluster biosynthesis. Master enzyme that delivers sulfur to a number of partners involved in Fe-S cluster assembly, tRNA modification or cofactor biosynthesis. Catalyzes the removal of elemental sulfur atoms from cysteine to produce alanine. Functions as a sulfur delivery protein for Fe-S cluster synthesis onto IscU, an Fe-S scaffold assembly protein, as well as other S acceptor proteins. The protein is Cysteine desulfurase IscS of Pectobacterium carotovorum subsp. carotovorum (strain PC1).